Consider the following 175-residue polypeptide: Crossover junction endodeoxyribonuclease RuvC (175 aa).

Active-site residues include Asp12, Glu72, and Asp144. Mg(2+)-binding residues include Asp12, Glu72, and Asp144.

Belongs to the RuvC family. In terms of assembly, homodimer which binds Holliday junction (HJ) DNA. The HJ becomes 2-fold symmetrical on binding to RuvC with unstacked arms; it has a different conformation from HJ DNA in complex with RuvA. In the full resolvosome a probable DNA-RuvA(4)-RuvB(12)-RuvC(2) complex forms which resolves the HJ. Mg(2+) serves as cofactor.

It localises to the cytoplasm. The enzyme catalyses Endonucleolytic cleavage at a junction such as a reciprocal single-stranded crossover between two homologous DNA duplexes (Holliday junction).. The RuvA-RuvB-RuvC complex processes Holliday junction (HJ) DNA during genetic recombination and DNA repair. Endonuclease that resolves HJ intermediates. Cleaves cruciform DNA by making single-stranded nicks across the HJ at symmetrical positions within the homologous arms, yielding a 5'-phosphate and a 3'-hydroxyl group; requires a central core of homology in the junction. The consensus cleavage sequence is 5'-(A/T)TT(C/G)-3'. Cleavage occurs on the 3'-side of the TT dinucleotide at the point of strand exchange. HJ branch migration catalyzed by RuvA-RuvB allows RuvC to scan DNA until it finds its consensus sequence, where it cleaves and resolves the cruciform DNA. The sequence is that of Crossover junction endodeoxyribonuclease RuvC from Beijerinckia indica subsp. indica (strain ATCC 9039 / DSM 1715 / NCIMB 8712).